The primary structure comprises 94 residues: Citrate lyase acyl carrier protein (94 aa).

The residue at position 14 (S14) is an O-(phosphoribosyl dephospho-coenzyme A)serine.

This sequence belongs to the CitD family. Oligomer with a subunit composition of (alpha,beta,gamma)6.

The protein resides in the cytoplasm. In terms of biological role, covalent carrier of the coenzyme of citrate lyase. This is Citrate lyase acyl carrier protein from Halothermothrix orenii (strain H 168 / OCM 544 / DSM 9562).